Reading from the N-terminus, the 416-residue chain is Calreticulin (416 aa).

The N-terminal stretch at 1–17 (MLLSVPLLLGLLGLAAA) is a signal peptide. Positions 18–197 (DPAIYFKEQF…NSQVESGSLE (180 aa)) are N-domain. Glutamine 26 provides a ligand contact to Ca(2+). At lysine 48 the chain carries N6-acetyllysine. Residues lysine 62 and lysine 64 each contribute to the Ca(2+) site. An N6-(2-hydroxyisobutyryl)lysine modification is found at lysine 64. An intrachain disulfide couples cysteine 105 to cysteine 137. An alpha-D-glucoside contacts are provided by tyrosine 109, lysine 111, tyrosine 128, and aspartate 135. Lysine 159 is modified (N6-acetyllysine). Residues 191–202 (VESGSLEDDWDF) form a 1-1 repeat. Positions 191–255 (VESGSLEDDW…DAKKPEDWDE (65 aa)) are 4 X approximate repeats. Residues 193–277 (SGSLEDDWDF…NPEYKGEWKP (85 aa)) form a disordered region. Positions 198–308 (DDWDFLPPKK…YSPDANIYAY (111 aa)) are P-domain. Residues 207 to 251 (KIKDPDAAKPEDWDERAKIDDPTDSKPEDWDKPEHIPDPDAKKPE) are compositionally biased toward basic and acidic residues. N6-acetyllysine is present on lysine 209. 6 tandem repeats follow at residues 210-221 (DPDAAKPEDWDE), 227-238 (DPTDSKPEDWDK), 244-255 (DPDAKKPEDWDE), 259-269 (GEWEPPVIQNP), 273-283 (GEWKPRQIDNP), and 287-297 (GTWIHPEIDNP). The interaction with PPIB stretch occupies residues 237–270 (DKPEHIPDPDAKKPEDWDEEMDGEWEPPVIQNPE). Residues 252-261 (DWDEEMDGEW) show a composition bias toward acidic residues. The 3 X approximate repeats stretch occupies residues 259-297 (GEWEPPVIQNPEYKGEWKPRQIDNPDYKGTWIHPEIDNP). The C-domain stretch occupies residues 309 to 416 (DSFAVLGLDL…ESPGQAKDEL (108 aa)). Aspartate 317 lines the an alpha-D-glucoside pocket. Residue aspartate 328 participates in Ca(2+) binding. Positions 350-416 (TKAAEKQMKD…ESPGQAKDEL (67 aa)) are disordered. Positions 352-379 (AAEKQMKDKQDEEQRLKEEEEDKKRKEE) are enriched in basic and acidic residues. Positions 380–408 (EEAEDKEDDDDRDEDEDEEDEKEEDEEES) are enriched in acidic residues. Residues 413–416 (KDEL) carry the Prevents secretion from ER motif.

The protein belongs to the calreticulin family. As to quaternary structure, monomer. Interacts with GABARAP, NR3C1, PDIA3/ERp57 and TRIM21. Interacts (via P-domain) with PDIA5. Interacts with PPIB. Interacts with SPACA9. Component of an EIF2 complex at least composed of CELF1/CUGBP1, CALR, CALR3, EIF2S1, EIF2S2, HSP90B1 and HSPA5. Interacts with CLCC1.

It localises to the endoplasmic reticulum lumen. Its subcellular location is the cytoplasm. The protein localises to the cytosol. It is found in the cytolytic granule. The protein resides in the secreted. It localises to the extracellular space. Its subcellular location is the extracellular matrix. The protein localises to the cell surface. It is found in the sarcoplasmic reticulum lumen. The protein resides in the cytoplasmic vesicle. It localises to the secretory vesicle. Its subcellular location is the cortical granule. Its function is as follows. Calcium-binding chaperone that promotes folding, oligomeric assembly and quality control in the endoplasmic reticulum (ER) via the calreticulin/calnexin cycle. This lectin interacts transiently with almost all of the monoglucosylated glycoproteins that are synthesized in the ER. Interacts with the DNA-binding domain of NR3C1 and mediates its nuclear export. Involved in maternal gene expression regulation. May participate in oocyte maturation via the regulation of calcium homeostasis. Present in the cortical granules of non-activated oocytes, is exocytosed during the cortical reaction in response to oocyte activation and might participate in the block to polyspermy. This Mus musculus (Mouse) protein is Calreticulin (Calr).